The following is a 381-amino-acid chain: 3-hydroxyisobutyryl-CoA hydrolase, mitochondrial (381 aa).

The transit peptide at methionine 1 to valine 25 directs the protein to the mitochondrion. Substrate-binding residues include glutamate 116, glycine 141, glutamate 164, and aspartate 172.

This sequence belongs to the enoyl-CoA hydratase/isomerase family.

It is found in the mitochondrion. It carries out the reaction 3-hydroxy-2-methylpropanoyl-CoA + H2O = 3-hydroxy-2-methylpropanoate + CoA + H(+). It functions in the pathway amino-acid degradation; L-valine degradation. In terms of biological role, hydrolyzes 3-hydroxyisobutyryl-CoA (HIBYL-CoA), a saline catabolite. This is 3-hydroxyisobutyryl-CoA hydrolase, mitochondrial (hibch) from Dictyostelium discoideum (Social amoeba).